A 320-amino-acid polypeptide reads, in one-letter code: Coproporphyrin III ferrochelatase (320 aa).

Residues H194 and E273 each contribute to the Fe(2+) site.

Belongs to the ferrochelatase family.

It localises to the cytoplasm. It carries out the reaction Fe-coproporphyrin III + 2 H(+) = coproporphyrin III + Fe(2+). The protein operates within porphyrin-containing compound metabolism; protoheme biosynthesis. Involved in coproporphyrin-dependent heme b biosynthesis. Catalyzes the insertion of ferrous iron into coproporphyrin III to form Fe-coproporphyrin III. The polypeptide is Coproporphyrin III ferrochelatase (Symbiobacterium thermophilum (strain DSM 24528 / JCM 14929 / IAM 14863 / T)).